The primary structure comprises 457 residues: Methylenetetrahydrofolate--tRNA-(uracil-5-)-methyltransferase TrmFO (457 aa).

7–12 (GAGLAG) contacts FAD. Positions 38–58 (FTSRQDEKTGTHDVRNATQTR) are disordered. The span at 40–52 (SRQDEKTGTHDVR) shows a compositional bias: basic and acidic residues.

This sequence belongs to the MnmG family. TrmFO subfamily. Requires FAD as cofactor.

Its subcellular location is the cytoplasm. It carries out the reaction uridine(54) in tRNA + (6R)-5,10-methylene-5,6,7,8-tetrahydrofolate + NADH + H(+) = 5-methyluridine(54) in tRNA + (6S)-5,6,7,8-tetrahydrofolate + NAD(+). It catalyses the reaction uridine(54) in tRNA + (6R)-5,10-methylene-5,6,7,8-tetrahydrofolate + NADPH + H(+) = 5-methyluridine(54) in tRNA + (6S)-5,6,7,8-tetrahydrofolate + NADP(+). Functionally, catalyzes the folate-dependent formation of 5-methyl-uridine at position 54 (M-5-U54) in all tRNAs. In Hydrogenobaculum sp. (strain Y04AAS1), this protein is Methylenetetrahydrofolate--tRNA-(uracil-5-)-methyltransferase TrmFO.